The sequence spans 336 residues: Flagellar filament 41 kDa core protein (336 aa).

The disordered stretch occupies residues 208–236; that stretch reads AAPVQEGVQQEGAQQPAPATAPSQGGVNS. The span at 210 to 233 shows a compositional bias: low complexity; that stretch reads PVQEGVQQEGAQQPAPATAPSQGG.

This sequence belongs to the bacterial flagellin family. As to quaternary structure, the flagellum consists of an outer layer composed of repeating units of FlaA around a core that contains several antigenically related polypeptides.

Its subcellular location is the periplasmic flagellum. It is found in the periplasm. Component of the core of the flagella. This chain is Flagellar filament 41 kDa core protein (fla), found in Borreliella burgdorferi (strain ATCC 35210 / DSM 4680 / CIP 102532 / B31) (Borrelia burgdorferi).